The following is a 260-amino-acid chain: 23S rRNA (guanosine-2'-O-)-methyltransferase RlmB (260 aa).

S-adenosyl-L-methionine is bound by residues Gly-197, Ile-217, and Leu-226.

This sequence belongs to the class IV-like SAM-binding methyltransferase superfamily. RNA methyltransferase TrmH family. RlmB subfamily.

The protein resides in the cytoplasm. It carries out the reaction guanosine(2251) in 23S rRNA + S-adenosyl-L-methionine = 2'-O-methylguanosine(2251) in 23S rRNA + S-adenosyl-L-homocysteine + H(+). In terms of biological role, specifically methylates the ribose of guanosine 2251 in 23S rRNA. This Nitrosomonas europaea (strain ATCC 19718 / CIP 103999 / KCTC 2705 / NBRC 14298) protein is 23S rRNA (guanosine-2'-O-)-methyltransferase RlmB.